The primary structure comprises 242 residues: RxLR effector protein PexRD15 (242 aa).

The N-terminal stretch at 1–24 (MMKSLYAVNLVLLLLLAFFAPAPA) is a signal peptide. The RxLR-dEER signature appears at 48 to 66 (RLLRAHSSDKEEQKEEEER).

Belongs to the RxLR effector family.

The protein localises to the secreted. The protein resides in the host cell membrane. Its function is as follows. Effector that enhances P.infestans colonization of Nicotiana benthamiana leaves. The protein is RxLR effector protein PexRD15 of Phytophthora infestans (strain T30-4) (Potato late blight agent).